Here is a 194-residue protein sequence, read N- to C-terminus: Bis(5'-nucleosyl)-tetraphosphatase, symmetrical (194 aa).

Residues 18 to 132 (RYNHSLRVAE…IFIADYIEPG (115 aa)) enclose the HD domain. His-21 is a binding site for ADP. 3 residues coordinate Fe cation: His-21, His-50, and Asp-51. ADP is bound by residues 51–54 (DFCK), His-83, 109–110 (HT), Asp-127, Arg-133, and 172–177 (TVYNKT). Asp-127 contributes to the Fe cation binding site.

Belongs to the Ap4A hydrolase YqeK family. As to quaternary structure, homodimer.

The catalysed reaction is P(1),P(4)-bis(5'-adenosyl) tetraphosphate + H2O = 2 ADP + 2 H(+). Its activity is regulated as follows. Inhibited by EDTA. Functionally, hydrolyzes diadenosine 5',5'''-P1,P4-tetraphosphate (Ap4A) to yield ADP. Can also hydrolyze Ap3A, Ap5A, Ap4G, Ap4U and Gp4G, always releasing ADP or GDP as one of the products, but it exhibits a marked preference for Ap4A, which is mainly exerted at the substrate affinity level. The chain is Bis(5'-nucleosyl)-tetraphosphatase, symmetrical from Staphylococcus aureus (strain NCTC 8325 / PS 47).